The primary structure comprises 297 residues: Bifunctional protein FolD 2 (297 aa).

Residues 172–174, Thr199, and Val240 contribute to the NADP(+) site; that span reads GRG.

This sequence belongs to the tetrahydrofolate dehydrogenase/cyclohydrolase family. In terms of assembly, homodimer.

The enzyme catalyses (6R)-5,10-methylene-5,6,7,8-tetrahydrofolate + NADP(+) = (6R)-5,10-methenyltetrahydrofolate + NADPH. It catalyses the reaction (6R)-5,10-methenyltetrahydrofolate + H2O = (6R)-10-formyltetrahydrofolate + H(+). It functions in the pathway one-carbon metabolism; tetrahydrofolate interconversion. Catalyzes the oxidation of 5,10-methylenetetrahydrofolate to 5,10-methenyltetrahydrofolate and then the hydrolysis of 5,10-methenyltetrahydrofolate to 10-formyltetrahydrofolate. The chain is Bifunctional protein FolD 2 from Paenarthrobacter aurescens (strain TC1).